The sequence spans 404 residues: Sodium/glutamate symporter (404 aa).

Transmembrane regions (helical) follow at residues 5–25, 33–53, 69–89, 95–115, 161–181, 219–239, 245–265, 277–297, 307–327, 338–358, and 373–393; these read FSTYETLALASLVLLLGYFLV, TFNIPEPVVGGFIVAIGLLIW, TTMMLVFFTSIGLSANFSRLI, LVVFLFIAALLIFGQNVIGIA, IAIACATFGLVFGGIIGGPVA, SLIETIAMISVCLLIGQYLDV, ALQLPTFVWCLFTGVIVRNIL, AIDVLGSVGLSIFLAIALMSL, IDVLIVLAIQVAFMAAFAIFI, AVVLSAGHCGFGLGATPTAIA, and AFLIVPMVGAFFIDLINAALL.

It belongs to the glutamate:Na(+) symporter (ESS) (TC 2.A.27) family.

It localises to the cell inner membrane. In terms of biological role, catalyzes the sodium-dependent transport of glutamate. This chain is Sodium/glutamate symporter, found in Haemophilus influenzae (strain ATCC 51907 / DSM 11121 / KW20 / Rd).